A 666-amino-acid chain; its full sequence is DNA mismatch repair protein MutL (666 aa).

Belongs to the DNA mismatch repair MutL/HexB family.

Functionally, this protein is involved in the repair of mismatches in DNA. It is required for dam-dependent methyl-directed DNA mismatch repair. May act as a 'molecular matchmaker', a protein that promotes the formation of a stable complex between two or more DNA-binding proteins in an ATP-dependent manner without itself being part of a final effector complex. This is DNA mismatch repair protein MutL from Clostridium botulinum (strain Okra / Type B1).